Consider the following 422-residue polypeptide: UDP-N-acetylglucosamine 1-carboxyvinyltransferase (422 aa).

22–23 (KN) lines the phosphoenolpyruvate pocket. Residue Arg93 coordinates UDP-N-acetyl-alpha-D-glucosamine. Catalysis depends on Cys117, which acts as the Proton donor. The residue at position 117 (Cys117) is a 2-(S-cysteinyl)pyruvic acid O-phosphothioketal. Residues 122–126 (RPVDL), Asp308, and Leu330 contribute to the UDP-N-acetyl-alpha-D-glucosamine site.

Belongs to the EPSP synthase family. MurA subfamily.

It is found in the cytoplasm. The enzyme catalyses phosphoenolpyruvate + UDP-N-acetyl-alpha-D-glucosamine = UDP-N-acetyl-3-O-(1-carboxyvinyl)-alpha-D-glucosamine + phosphate. It participates in cell wall biogenesis; peptidoglycan biosynthesis. Cell wall formation. Adds enolpyruvyl to UDP-N-acetylglucosamine. This Helicobacter acinonychis (strain Sheeba) protein is UDP-N-acetylglucosamine 1-carboxyvinyltransferase.